The following is a 318-amino-acid chain: Methionyl-tRNA formyltransferase (318 aa).

110 to 113 (SLLP) contributes to the (6S)-5,6,7,8-tetrahydrofolate binding site.

This sequence belongs to the Fmt family.

The enzyme catalyses L-methionyl-tRNA(fMet) + (6R)-10-formyltetrahydrofolate = N-formyl-L-methionyl-tRNA(fMet) + (6S)-5,6,7,8-tetrahydrofolate + H(+). In terms of biological role, attaches a formyl group to the free amino group of methionyl-tRNA(fMet). The formyl group appears to play a dual role in the initiator identity of N-formylmethionyl-tRNA by promoting its recognition by IF2 and preventing the misappropriation of this tRNA by the elongation apparatus. The protein is Methionyl-tRNA formyltransferase of Latilactobacillus sakei subsp. sakei (strain 23K) (Lactobacillus sakei subsp. sakei).